Reading from the N-terminus, the 274-residue chain is 4-diphosphocytidyl-2-C-methyl-D-erythritol kinase (274 aa).

The active site involves K9. P91–S101 contributes to the ATP binding site. The active site involves D133.

Belongs to the GHMP kinase family. IspE subfamily.

The enzyme catalyses 4-CDP-2-C-methyl-D-erythritol + ATP = 4-CDP-2-C-methyl-D-erythritol 2-phosphate + ADP + H(+). Its pathway is isoprenoid biosynthesis; isopentenyl diphosphate biosynthesis via DXP pathway; isopentenyl diphosphate from 1-deoxy-D-xylulose 5-phosphate: step 3/6. Its function is as follows. Catalyzes the phosphorylation of the position 2 hydroxy group of 4-diphosphocytidyl-2C-methyl-D-erythritol. The protein is 4-diphosphocytidyl-2-C-methyl-D-erythritol kinase of Persephonella marina (strain DSM 14350 / EX-H1).